The primary structure comprises 264 residues: Proliferating cell nuclear antigen 2 (264 aa).

This sequence belongs to the PCNA family. As to quaternary structure, homotrimer. Oligomer. Interacts with ORC1 (via PIP-box motif). Interacts with FEN1.

Its subcellular location is the nucleus. It localises to the chromosome. It is found in the cytoplasm. Functionally, may be involved in DNA damage response. Appears not to be involved in DNA replication in trophozoites. The sequence is that of Proliferating cell nuclear antigen 2 from Plasmodium falciparum (isolate 3D7).